A 200-amino-acid polypeptide reads, in one-letter code: MYVMKQSGWLEVICGSMFSGKSEELIRRAKRATFAKQEVKIFKPAIDNRYSTSSVVSHNGSSVDGIAVASPKDIITHISERTDVIGIDEVQFFDETIIDIVTQLADKGYRVIVAGLDQDFRGEPFGVVPHLMACAELVTKLQAVCSVCGSPASRTQRLIDGKPASYDDPIILVGAQESYEARCRHHHEVPRLDVGTTLDN.

Residues 15–22 (GSMFSGKS) and 88–91 (DEVQ) contribute to the ATP site. Glutamate 89 functions as the Proton acceptor in the catalytic mechanism. Positions 145, 148, 183, and 186 each coordinate Zn(2+).

This sequence belongs to the thymidine kinase family. In terms of assembly, homotetramer.

The protein localises to the cytoplasm. It carries out the reaction thymidine + ATP = dTMP + ADP + H(+). This chain is Thymidine kinase, found in Bacillus pumilus (strain SAFR-032).